We begin with the raw amino-acid sequence, 621 residues long: 1,4-alpha-glucan branching enzyme GlgB (621 aa).

Aspartate 302 serves as the catalytic Nucleophile. Glutamate 355 (proton donor) is an active-site residue.

This sequence belongs to the glycosyl hydrolase 13 family. GlgB subfamily. Monomer.

The enzyme catalyses Transfers a segment of a (1-&gt;4)-alpha-D-glucan chain to a primary hydroxy group in a similar glucan chain.. It functions in the pathway glycan biosynthesis; glycogen biosynthesis. Its function is as follows. Catalyzes the formation of the alpha-1,6-glucosidic linkages in glycogen by scission of a 1,4-alpha-linked oligosaccharide from growing alpha-1,4-glucan chains and the subsequent attachment of the oligosaccharide to the alpha-1,6 position. This is 1,4-alpha-glucan branching enzyme GlgB from Dechloromonas aromatica (strain RCB).